The sequence spans 436 residues: MKFLDIRDTNFDMEFAAILARGEETGREVEQVVLDIIADVRARGDEALLEYTRRFDRLEADSVASLQVTEDEVDYAFARVKDEEIAALKLAVERVARFHEKQKQETWLSTGEPDILLGQMVTPLERVGIYVPGGKASYPSSVIMNAVPARVAGVGEVVMVAPTPGGEINPHVLVAARFSGVDRIFRLGGAQAVAALAYGTATVPKVDKITGPGNIYVATAKKLVFGQVGIDMIAGPSEILVINDGSGTPAHIAADLLSQAEHDELASSILITTDRGFGERVAAEVERQLAELSRETIARRSWETYGAVIVAGSLDEAIAFSNRIAPEHLELAVTNPFDVLPKIRNAGAIFLGHFTPEAAGDYLAGPNHTLPTGGTARFFSPLSVDDFVKKSSIVYFSESGLNRLGGGIVRIAELEGLEAHGRSVSVRLKGEGEARK.

NAD(+) contacts are provided by Tyr130, Gln191, and Asn214. Substrate is bound by residues Ser237, Gln259, and His262. Zn(2+)-binding residues include Gln259 and His262. Catalysis depends on proton acceptor residues Glu327 and His328. 4 residues coordinate substrate: His328, Asp361, Glu415, and His420. Zn(2+) is bound at residue Asp361. Zn(2+) is bound at residue His420.

Belongs to the histidinol dehydrogenase family. Requires Zn(2+) as cofactor.

It catalyses the reaction L-histidinol + 2 NAD(+) + H2O = L-histidine + 2 NADH + 3 H(+). Its pathway is amino-acid biosynthesis; L-histidine biosynthesis; L-histidine from 5-phospho-alpha-D-ribose 1-diphosphate: step 9/9. Its function is as follows. Catalyzes the sequential NAD-dependent oxidations of L-histidinol to L-histidinaldehyde and then to L-histidine. The protein is Histidinol dehydrogenase of Geobacter metallireducens (strain ATCC 53774 / DSM 7210 / GS-15).